We begin with the raw amino-acid sequence, 176 residues long: Probable DNA-directed RNA polymerase subunit delta (176 aa).

Residues 14–81 (CSMIEVVHSV…GENRWGLRSW (68 aa)) enclose the HTH HARE-type domain. The interval 91–176 (ILPQPKPKKK…ETEEEEEEEL (86 aa)) is disordered. Residues 106 to 176 (DGFDDYIEED…ETEEEEEEEL (71 aa)) are compositionally biased toward acidic residues.

It belongs to the RpoE family. RNAP is composed of a core of 2 alpha, a beta and a beta' subunits. The core is associated with a delta subunit and one of several sigma factors.

Its function is as follows. Participates in both the initiation and recycling phases of transcription. In the presence of the delta subunit, RNAP displays an increased specificity of transcription, a decreased affinity for nucleic acids, and an increased efficiency of RNA synthesis because of enhanced recycling. This is Probable DNA-directed RNA polymerase subunit delta from Bacillus thuringiensis (strain Al Hakam).